Reading from the N-terminus, the 465-residue chain is Argininosuccinate lyase (465 aa).

The protein belongs to the lyase 1 family. Argininosuccinate lyase subfamily.

The protein resides in the cytoplasm. It carries out the reaction 2-(N(omega)-L-arginino)succinate = fumarate + L-arginine. It participates in amino-acid biosynthesis; L-arginine biosynthesis; L-arginine from L-ornithine and carbamoyl phosphate: step 3/3. This is Argininosuccinate lyase from Rhodopseudomonas palustris (strain ATCC BAA-98 / CGA009).